The sequence spans 410 residues: Angiopoietin-related protein 4 (410 aa).

The N-terminal stretch at 1-23 is a signal peptide; the sequence is MRCAPTAGAALVLCAATAGLLSA. Residues 79–101 are disordered; it reads ACQGPKGKDAPFKDSEDRVPEGQ. Residues 84–98 show a composition bias toward basic and acidic residues; that stretch reads KGKDAPFKDSEDRVP. A coiled-coil region spans residues 104 to 152; that stretch reads ETLQSLQTQLKAQNSKIQQLFQKVAQQQRYLSKQNLRIQNLQSQIDLLA. N-linked (GlcNAc...) asparagine glycosylation is present at Asn181. Residues 183 to 405 enclose the Fibrinogen C-terminal domain; it reads THLHRPPRDC…ATTLLIQPME (223 aa). Cys192 and Cys220 form a disulfide bridge. N-linked (GlcNAc...) asparagine glycosylation is found at Asn236 and Asn242. The cysteines at positions 345 and 358 are disulfide-linked.

In terms of assembly, homooligomer; disulfide-linked via Cys residues in the N-terminal part of the protein. The homooligomer undergoes proteolytic processing to release the ANGPTL4 C-terminal chain, which circulates as a monomer. The homooligomer unprocessed form is able to interact with the extracellular matrix. Post-translationally, N-glycosylated. In terms of processing, forms disulfide-linked dimers and tetramers. Cleaved into a smaller N-terminal chain and a larger chain that contains the fibrinogen C-terminal domain; both cleaved and uncleaved forms are detected in the extracellular space. The cleaved form is not present within the cell. In terms of tissue distribution, detected in liver and kidney. Predominantly expressed in adipose tissue and is strongly up-regulated by fasting in white adipose tissue and liver. More abundant in areas of lower flow stress in the inner curvature compared to the outer curvature regions of the aorta (at protein level).

It localises to the secreted. The protein localises to the extracellular space. It is found in the extracellular matrix. Functionally, mediates inactivation of the lipoprotein lipase LPL, and thereby plays a role in the regulation of triglyceride clearance from the blood serum and in lipid metabolism. May also play a role in regulating glucose homeostasis and insulin sensitivity. Inhibits proliferation, migration, and tubule formation of endothelial cells and reduces vascular leakage. Upon heterologous expression, inhibits the adhesion of endothelial cell to the extracellular matrix (ECM), and inhibits the reorganization of the actin cytoskeleton, formation of actin stress fibers and focal adhesions in endothelial cells that have adhered to ANGPTL4-containing ECM (in vitro). Depending on context, may modulate tumor-related angiogenesis. Mediates inactivation of the lipoprotein lipase LPL, and thereby plays an important role in the regulation of triglyceride clearance from the blood serum and in lipid metabolism. Has higher activity in LPL inactivation than the uncleaved protein. The polypeptide is Angiopoietin-related protein 4 (Angptl4) (Mus musculus (Mouse)).